A 235-amino-acid polypeptide reads, in one-letter code: Ribitol-5-phosphate cytidylyltransferase (235 aa).

CTP is bound by residues 7–10 (LAGG), 82–88 (GADRNTS), and Ser113.

It belongs to the IspD/TarI cytidylyltransferase family. TarI subfamily.

It catalyses the reaction D-ribitol 5-phosphate + CTP + H(+) = CDP-L-ribitol + diphosphate. Its pathway is cell wall biogenesis; poly(ribitol phosphate) teichoic acid biosynthesis. Functionally, catalyzes the transfer of the cytidylyl group of CTP to D-ribitol 5-phosphate. The sequence is that of Ribitol-5-phosphate cytidylyltransferase from Streptococcus pneumoniae (strain CGSP14).